Here is a 223-residue protein sequence, read N- to C-terminus: Phosphoribosylformylglycinamidine synthase subunit PurQ (223 aa).

In terms of domain architecture, Glutamine amidotransferase type-1 spans 4–223; the sequence is KIGVITFPGT…FLSAIGTIAA (220 aa). The active-site Nucleophile is Cys87. Active-site residues include His195 and Glu197.

In terms of assembly, part of the FGAM synthase complex composed of 1 PurL, 1 PurQ and 2 PurS subunits.

It localises to the cytoplasm. It catalyses the reaction N(2)-formyl-N(1)-(5-phospho-beta-D-ribosyl)glycinamide + L-glutamine + ATP + H2O = 2-formamido-N(1)-(5-O-phospho-beta-D-ribosyl)acetamidine + L-glutamate + ADP + phosphate + H(+). The catalysed reaction is L-glutamine + H2O = L-glutamate + NH4(+). Its pathway is purine metabolism; IMP biosynthesis via de novo pathway; 5-amino-1-(5-phospho-D-ribosyl)imidazole from N(2)-formyl-N(1)-(5-phospho-D-ribosyl)glycinamide: step 1/2. Functionally, part of the phosphoribosylformylglycinamidine synthase complex involved in the purines biosynthetic pathway. Catalyzes the ATP-dependent conversion of formylglycinamide ribonucleotide (FGAR) and glutamine to yield formylglycinamidine ribonucleotide (FGAM) and glutamate. The FGAM synthase complex is composed of three subunits. PurQ produces an ammonia molecule by converting glutamine to glutamate. PurL transfers the ammonia molecule to FGAR to form FGAM in an ATP-dependent manner. PurS interacts with PurQ and PurL and is thought to assist in the transfer of the ammonia molecule from PurQ to PurL. The sequence is that of Phosphoribosylformylglycinamidine synthase subunit PurQ from Corynebacterium efficiens (strain DSM 44549 / YS-314 / AJ 12310 / JCM 11189 / NBRC 100395).